Reading from the N-terminus, the 332-residue chain is Putative ketol-acid reductoisomerase 3 (332 aa).

The KARI N-terminal Rossmann domain maps to 1 to 182 (MDKTVLDASL…AIPGGIAVIS (182 aa)). In terms of domain architecture, KARI C-terminal knotted spans 183–329 (SFEEEALLDL…KELYKILRRK (147 aa)).

It belongs to the ketol-acid reductoisomerase family.

The catalysed reaction is (2R)-2,3-dihydroxy-3-methylbutanoate + NADP(+) = (2S)-2-acetolactate + NADPH + H(+). The enzyme catalyses (2R,3R)-2,3-dihydroxy-3-methylpentanoate + NADP(+) = (S)-2-ethyl-2-hydroxy-3-oxobutanoate + NADPH + H(+). It participates in amino-acid biosynthesis; L-isoleucine biosynthesis; L-isoleucine from 2-oxobutanoate: step 2/4. It functions in the pathway amino-acid biosynthesis; L-valine biosynthesis; L-valine from pyruvate: step 2/4. This Saccharolobus solfataricus (strain ATCC 35092 / DSM 1617 / JCM 11322 / P2) (Sulfolobus solfataricus) protein is Putative ketol-acid reductoisomerase 3 (ilvC3).